Reading from the N-terminus, the 338-residue chain is LIX1-like protein (338 aa).

The tract at residues 1–65 (METMRAQRLQ…LLLAGAPGLP (65 aa)) is disordered. Residues 29–38 (TGAPTSAATP) show a composition bias toward low complexity. Positions 39–56 (PAGPPPAPPPPAPPPPPL) are enriched in pro residues.

It belongs to the LIX1 family.

This chain is LIX1-like protein (Lix1l), found in Rattus norvegicus (Rat).